The chain runs to 220 residues: Guanylate kinase (220 aa).

Positions 14–194 (GLMVVISSPS…SYAAIKSIIN (181 aa)) constitute a Guanylate kinase-like domain. 21–28 (SPSGAGKS) is a binding site for ATP.

Belongs to the guanylate kinase family.

It localises to the cytoplasm. It carries out the reaction GMP + ATP = GDP + ADP. Essential for recycling GMP and indirectly, cGMP. This is Guanylate kinase from Brucella abortus (strain 2308).